A 613-amino-acid chain; its full sequence is Nuclear receptor subfamily 1 group D member 1 (613 aa).

Residues 1–48 show a composition bias toward polar residues; the sequence is MTTLDSNNNTGGVITYIGSSGSSPNRTSPESLYSDSSNGSFQSLTQGC. Residues 1 to 70 are required for phosphorylation by CSNK1E and cytoplasmic localization; sequence MTTLDSNNNT…TQDPARSFGS (70 aa). A disordered region spans residues 1–102; that stretch reads MTTLDSNNNT…SSFYNGSPPG (102 aa). The segment at 1–129 is modulating; the sequence is MTTLDSNNNT…TSNITKLNGM (129 aa). Residues 49-285 are crucial for activation of GJA1; it reads PTYFPPSPTG…PPRSPSPEPT (237 aa). 2 positions are modified to phosphoserine; by GSK3-beta: S55 and S59. Residues 69 to 102 show a composition bias toward low complexity; that stretch reads GSIPPSLGDDGSPSSSSSSSSSSSSSFYNGSPPG. The nuclear receptor DNA-binding region spans 130–206; sequence VLLCKVCGDV…VGMSRDAVRF (77 aa). 2 NR C4-type zinc fingers span residues 133-153 and 170-194; these read CKVC…CEGC and CLKN…FKKC. An N6-acetyllysine; by KAT5 mark is found at K192 and K193. The tract at residues 233-286 is disordered; it reads SSQCPLETPPTQHPTPGPMGPSPPPAPAPSPLVGFSQFPQQLTPPRSPSPEPTV. Residues 239 to 262 are compositionally biased toward pro residues; sequence ETPPTQHPTPGPMGPSPPPAPAPS. T275 carries the post-translational modification Phosphothreonine; by CDK1. The 329-residue stretch at 285–613 folds into the NR LBD domain; the sequence is TVEDVISQVA…KLLSFRVDAQ (329 aa). C417 serves as a coordination point for heme. Position 590 is an N6-acetyllysine (K590). H601 contributes to the heme binding site.

It belongs to the nuclear hormone receptor family. NR1 subfamily. As to quaternary structure, binds DNA as a monomer or a homodimer. Interacts with C1D, SP1 and ZNHIT1. Interacts with OPHN1 (via C-terminus). Interacts with PER2; the interaction associates PER2 to BMAL1 promoter region. Interacts with CRY1. Interacts with CCAR2. Interacts with NR2E3. Interacts with SIAH2. Interacts with FBXW7 and CDK1. Interacts with HUWE1. Interacts with NR0B2. Interacts with NFIL3. Interacts (via domain NR LBD) with HSP90AA1 and HSP90AB1. In terms of processing, ubiquitinated, leading to its proteasomal degradation. Ubiquitinated by the SCF(FBXW7) complex when phosphorylated by CDK1 leading to its proteasomal degradation. Ubiquitinated by SIAH2; leading to its proteasomal degradation. Rapidly ubiquitinated in response to inflammatory triggers and sumoylation is a prerequisite to its ubiquitination. Post-translationally, sumoylated by UBE2I, desumoylated by SENP1, and sumoylation is a prerequisite to its ubiquitination. Phosphorylated by CSNK1E; phosphorylation enhances its cytoplasmic localization. In terms of processing, undergoes lysosome-mediated degradation in a time-dependent manner in the liver. As to expression, expressed in all tissues and cell lines examined. Expressed at high levels in some squamous carcinoma cell lines.

Its subcellular location is the nucleus. The protein resides in the cytoplasm. The protein localises to the cell projection. It is found in the dendrite. It localises to the dendritic spine. Functionally, transcriptional repressor which coordinates circadian rhythm and metabolic pathways in a heme-dependent manner. Integral component of the complex transcription machinery that governs circadian rhythmicity and forms a critical negative limb of the circadian clock by directly repressing the expression of core clock components BMAL1, CLOCK and CRY1. Also regulates genes involved in metabolic functions, including lipid and bile acid metabolism, adipogenesis, gluconeogenesis and the macrophage inflammatory response. Acts as a receptor for heme which stimulates its interaction with the NCOR1/HDAC3 corepressor complex, enhancing transcriptional repression. Recognizes two classes of DNA response elements within the promoter of its target genes and can bind to DNA as either monomers or homodimers, depending on the nature of the response element. Binds as a monomer to a response element composed of the consensus half-site motif 5'-[A/G]GGTCA-3' preceded by an A/T-rich 5' sequence (RevRE), or as a homodimer to a direct repeat of the core motif spaced by two nucleotides (RevDR-2). Acts as a potent competitive repressor of ROR alpha (RORA) function and regulates the levels of its ligand heme by repressing the expression of PPARGC1A, a potent inducer of heme synthesis. Regulates lipid metabolism by repressing the expression of APOC3 and by influencing the activity of sterol response element binding proteins (SREBPs); represses INSIG2 which interferes with the proteolytic activation of SREBPs which in turn govern the rhythmic expression of enzymes with key functions in sterol and fatty acid synthesis. Regulates gluconeogenesis via repression of G6PC1 and PEPCK and adipocyte differentiation via repression of PPARG. Regulates glucagon release in pancreatic alpha-cells via the AMPK-NAMPT-SIRT1 pathway and the proliferation, glucose-induced insulin secretion and expression of key lipogenic genes in pancreatic-beta cells. Positively regulates bile acid synthesis by increasing hepatic expression of CYP7A1 via repression of NR0B2 and NFIL3 which are negative regulators of CYP7A1. Modulates skeletal muscle oxidative capacity by regulating mitochondrial biogenesis and autophagy; controls mitochondrial biogenesis and respiration by interfering with the STK11-PRKAA1/2-SIRT1-PPARGC1A signaling pathway. Represses the expression of SERPINE1/PAI1, an important modulator of cardiovascular disease and the expression of inflammatory cytokines and chemokines in macrophages. Represses gene expression at a distance in macrophages by inhibiting the transcription of enhancer-derived RNAs (eRNAs). Plays a role in the circadian regulation of body temperature and negatively regulates thermogenic transcriptional programs in brown adipose tissue (BAT); imposes a circadian oscillation in BAT activity, increasing body temperature when awake and depressing thermogenesis during sleep. In concert with NR2E3, regulates transcriptional networks critical for photoreceptor development and function. In addition to its activity as a repressor, can also act as a transcriptional activator. In the ovarian granulosa cells acts as a transcriptional activator of STAR which plays a role in steroid biosynthesis. In collaboration with SP1, activates GJA1 transcription in a heme-independent manner. Represses the transcription of CYP2B10, CYP4A10 and CYP4A14. Represses the transcription of CES2. Represses and regulates the circadian expression of TSHB in a NCOR1-dependent manner. Negatively regulates the protein stability of NR3C1 and influences the time-dependent subcellular distribution of NR3C1, thereby affecting its transcriptional regulatory activity. Plays a critical role in the circadian control of neutrophilic inflammation in the lung; under resting, non-stress conditions, acts as a rhythmic repressor to limit inflammatory activity whereas in the presence of inflammatory triggers undergoes ubiquitin-mediated degradation thereby relieving inhibition of the inflammatory response. Plays a key role in the circadian regulation of microglial activation and neuroinflammation; suppresses microglial activation through the NF-kappaB pathway in the central nervous system. Plays a role in the regulation of the diurnal rhythms of lipid and protein metabolism in the skeletal muscle via transcriptional repression of genes controlling lipid and amino acid metabolism in the muscle. The protein is Nuclear receptor subfamily 1 group D member 1 (NR1D1) of Bos taurus (Bovine).